The primary structure comprises 324 residues: MTYSKISQAAHHLPEQVISNDDLSLILETNDQWISSRTGIKERRISRSENTSDLASRVAEKLLEKANIDATEIDFIIVATITGDSIMPSVAAKVQGTIGATHAFAFDMTAACSGFVFALAMADKLIRSASYQKGLVIGAEVLSKYLDWEDRSTAVLFGDGAGGVLVEACSEQHFMAESLHTDGSRGQNLTSGNNPLRSPFSDSEEASPFIKMDGRAIFDFAIRDVSKSIISLLEESSVTAEEIDYFLLHQANRRILDKMARKIGCPRDKFLENMMTYGNTSAASIPILLSESVEKGLILLDGSQKVLLSGFGGGLTWGSLIVKI.

The active site involves C112. A disordered region spans residues 181 to 202; the sequence is TDGSRGQNLTSGNNPLRSPFSD. Positions 184 to 196 are enriched in polar residues; it reads SRGQNLTSGNNPL. H249 is an active-site residue. Positions 250 to 254 are ACP-binding; that stretch reads QANRR. N279 is an active-site residue.

The protein belongs to the thiolase-like superfamily. FabH family. Homodimer.

It localises to the cytoplasm. It catalyses the reaction malonyl-[ACP] + acetyl-CoA + H(+) = 3-oxobutanoyl-[ACP] + CO2 + CoA. Its pathway is lipid metabolism; fatty acid biosynthesis. Functionally, catalyzes the condensation reaction of fatty acid synthesis by the addition to an acyl acceptor of two carbons from malonyl-ACP. Catalyzes the first condensation reaction which initiates fatty acid synthesis and may therefore play a role in governing the total rate of fatty acid production. Possesses both acetoacetyl-ACP synthase and acetyl transacylase activities. Its substrate specificity determines the biosynthesis of branched-chain and/or straight-chain of fatty acids. The sequence is that of Beta-ketoacyl-[acyl-carrier-protein] synthase III from Streptococcus uberis (strain ATCC BAA-854 / 0140J).